We begin with the raw amino-acid sequence, 498 residues long: MTTPKKEIDRTIYDLLGIGIGPFNLGLAALCEPINDLSCLFLDAKTEFDWHPGMLINSSRLQTPFMSDLVTMADPTSRFSYLNFAKQTSRLYSFYIRENFFLPRHEYNQYCQWVSKQLSNLNFGVKVTQVNYNAGEGIYAVTAIDRRSGKPLTYLCRKLVLGTGTTPYLPDNCPIQDPRVMHSASYMQQKTYLQSQSAITVIGSGQSAAEIFYDLLQDIDIYGYQLNWMTRSPRFYPLEYTKLTLEMTSPDYVDYFHELSSEKRHRLITEQKSLYKGINAELINDIYDLLYQKRLISNIQCQLLTNVALTAIDTSGDKLKLQFKHLEQDYALDQLTSAVVLGTGYQYHLPDFIQGIKSQIEFDDHGQLAIQRDYGIDVRGDIFIQNAGLHTHGISSPDLGMGCYRNATILQAVLGYAPYPIETRIAFQTFAPCNIADAKRQPLESNTHSAVTPSKTRQGLNPSAKSVQQPSIEPQTALRIAPTGGNVSALMAPNKEAQ.

6 residues coordinate FAD: Phe23, Asp43, Lys45, Trp50, His51, and Gln62. The NADP(+) site is built by Gln62 and Arg104. An FAD-binding site is contributed by Val127. Residues Ser207, Arg231, Tyr275, and Leu309 each contribute to the NADP(+) site. Residues Asn386, Pro397, and Leu399 each coordinate FAD. Polar residues predominate over residues 443 to 474; it reads LESNTHSAVTPSKTRQGLNPSAKSVQQPSIEP. Residues 443-498 form a disordered region; it reads LESNTHSAVTPSKTRQGLNPSAKSVQQPSIEPQTALRIAPTGGNVSALMAPNKEAQ.

The protein belongs to the lysine N(6)-hydroxylase/L-ornithine N(5)-oxygenase family. FAD serves as cofactor.

It carries out the reaction putrescine + NADPH + O2 = N-hydroxyputrescine + NADP(+) + H2O. Its pathway is siderophore biosynthesis. Its function is as follows. N-hydroxylating monooxygenase involved in the biosynthesis of the siderophore putrebactin. Catalyzes the N-hydroxylation of the aliphatic diamine putrescine into N-hydroxyputrescine (NHP). The polypeptide is Putrescine N-hydroxylase (Shewanella oneidensis (strain ATCC 700550 / JCM 31522 / CIP 106686 / LMG 19005 / NCIMB 14063 / MR-1)).